A 309-amino-acid chain; its full sequence is Gamma-hemolysin component A (309 aa).

The signal sequence occupies residues methionine 1 to alanine 29.

The protein belongs to the aerolysin family. As to quaternary structure, toxicity requires sequential binding and synergistic association of a class S and a class F component which form heterooligomeric complexes. HlgA (class S) associates with HlgB (class F) thus forming an AB toxin in strains producing both gamma-hemolysins and leukocidins. HlgA and LukF-PV can also form a complex.

The protein resides in the secreted. Its function is as follows. Toxin that seems to act by forming pores in the membrane of the cell. Has a hemolytic and a leucotoxic activity. This chain is Gamma-hemolysin component A (hlgA), found in Staphylococcus aureus (strain COL).